Here is a 392-residue protein sequence, read N- to C-terminus: Spermatogenesis associated 6-like protein (392 aa).

A phosphoserine mark is found at S260 and S263. Positions S286–Q301 are enriched in low complexity. The disordered stretch occupies residues S286–D305.

Belongs to the SPATA6 family.

This chain is Spermatogenesis associated 6-like protein (SPATA6L), found in Homo sapiens (Human).